The following is a 260-amino-acid chain: Snake venom serine protease pallabin-2 (260 aa).

Positions 1 to 18 (MVLIKVLANLLILQLSYA) are cleaved as a signal peptide. Positions 19–24 (QKSSEL) are excised as a propeptide. The region spanning 25–251 (IIGGDECNIN…HLDWIENIIA (227 aa)) is the Peptidase S1 domain. 6 cysteine pairs are disulfide-bonded: Cys-31-Cys-163, Cys-50-Cys-66, Cys-98-Cys-258, Cys-142-Cys-212, Cys-174-Cys-191, and Cys-202-Cys-227. The active-site Charge relay system is His-65. An N-linked (GlcNAc...) asparagine glycan is attached at Asn-103. The active-site Charge relay system is the Asp-110. Ser-206 functions as the Charge relay system in the catalytic mechanism.

Belongs to the peptidase S1 family. Snake venom subfamily. Monomer. Expressed by the venom gland.

It is found in the secreted. In terms of biological role, snake venom serine protease that may act in the hemostasis system of the prey. This is Snake venom serine protease pallabin-2 (JZTHR7) from Gloydius halys (Chinese water mocassin).